Reading from the N-terminus, the 465-residue chain is MSNKMWGGRFTDRPDAIMEEINVSIDVDRHLYAQDIAASKAHAAMLAAQGIITANDAKNIGKGLDTILSEIGAGKFTFKRALEDIHMNVESRLAELIGPAAGRLHTARSRNDQVATDFRLYVRDVLDETDAALASFQRALVERALEHAETVMPGFTHLQTAQPVTFGHHLMAYVEMAARDRGRFQDARKRLNESPLGAAALAGTSFPIDRHATAKKLGFDRPMANSLDAVSDRDFVLETLSAASICAVHLSRFAEEIVIWTSPLVGLVRLSDKFTTGSSIMPQKRNPDAAELVRAKTGRVIGALNGLLIVMKGLPLAYQKDMQEDKQGAMEGFAALSLAIRAMTGMVRDIVPEQDRMRAAAGEGYATATDLADWLVRTLKMPFRDAHHVTGKIVGLAAKAGVALHELPLKEMQAVEPKISRDALAVLSVESSVKSRTSYGGTAPKNVRAQAKAWLKRLEKEQKLG.

It belongs to the lyase 1 family. Argininosuccinate lyase subfamily.

It is found in the cytoplasm. It carries out the reaction 2-(N(omega)-L-arginino)succinate = fumarate + L-arginine. Its pathway is amino-acid biosynthesis; L-arginine biosynthesis; L-arginine from L-ornithine and carbamoyl phosphate: step 3/3. In Rhodopseudomonas palustris (strain BisB5), this protein is Argininosuccinate lyase.